Here is a 315-residue protein sequence, read N- to C-terminus: Ribosomal RNA small subunit methyltransferase H (315 aa).

Residues 35-37 (GGH), Asp-55, Phe-79, Asp-101, and Gln-108 each bind S-adenosyl-L-methionine.

The protein belongs to the methyltransferase superfamily. RsmH family.

The protein localises to the cytoplasm. It carries out the reaction cytidine(1402) in 16S rRNA + S-adenosyl-L-methionine = N(4)-methylcytidine(1402) in 16S rRNA + S-adenosyl-L-homocysteine + H(+). Functionally, specifically methylates the N4 position of cytidine in position 1402 (C1402) of 16S rRNA. The polypeptide is Ribosomal RNA small subunit methyltransferase H (Sodalis glossinidius (strain morsitans)).